Consider the following 213-residue polypeptide: NADH-quinone oxidoreductase subunit B 1 (213 aa).

[4Fe-4S] cluster-binding residues include cysteine 82, cysteine 83, cysteine 148, and cysteine 177.

This sequence belongs to the complex I 20 kDa subunit family. NDH-1 is composed of 14 different subunits. Subunits NuoB, C, D, E, F, and G constitute the peripheral sector of the complex. [4Fe-4S] cluster is required as a cofactor.

The protein resides in the cell inner membrane. The catalysed reaction is a quinone + NADH + 5 H(+)(in) = a quinol + NAD(+) + 4 H(+)(out). Its function is as follows. NDH-1 shuttles electrons from NADH, via FMN and iron-sulfur (Fe-S) centers, to quinones in the respiratory chain. The immediate electron acceptor for the enzyme in this species is believed to be ubiquinone. Couples the redox reaction to proton translocation (for every two electrons transferred, four hydrogen ions are translocated across the cytoplasmic membrane), and thus conserves the redox energy in a proton gradient. This Koribacter versatilis (strain Ellin345) protein is NADH-quinone oxidoreductase subunit B 1.